Here is a 155-residue protein sequence, read N- to C-terminus: Zinc finger HIT domain-containing protein 3 (155 aa).

Zn(2+) is bound by residues Cys11, Cys14, Cys22, Cys25, Cys30, Cys34, His38, and Cys42. The HIT-type zinc finger occupies 11 to 42; sequence CVICLEKPKYRCPACRVPYCSVVCFRKHKEQC. A Phosphoserine modification is found at Ser80.

As to quaternary structure, thyroid receptor interacting proteins (TRIPs) specifically interact with the ligand binding domain of the thyroid receptor (TR). Requires the presence of thyroid hormone for its interaction. Interacts with NUFIP1. Interacts (via HIT-type zinc finger) with the RUVBL1/RUVBL2 complex in the presence of ADP.

It is found in the cytoplasm. Its subcellular location is the nucleus. In Homo sapiens (Human), this protein is Zinc finger HIT domain-containing protein 3 (ZNHIT3).